The sequence spans 143 residues: Small ribosomal subunit protein uS12 (143 aa).

Residues 1-15 are compositionally biased toward basic residues; sequence MGKCRGLRTARKLRD. The interval 1–27 is disordered; that stretch reads MGKCRGLRTARKLRDHRREQKWHDKQY. The segment covering 16–27 has biased composition (basic and acidic residues); sequence HRREQKWHDKQY.

This sequence belongs to the universal ribosomal protein uS12 family. As to quaternary structure, component of the 40S small ribosomal subunit.

It localises to the cytoplasm. Its subcellular location is the cytosol. The protein localises to the rough endoplasmic reticulum. This Ictalurus punctatus (Channel catfish) protein is Small ribosomal subunit protein uS12 (rps23).